We begin with the raw amino-acid sequence, 274 residues long: Large ribosomal subunit protein uL2c (274 aa).

Residues 224 to 274 form a disordered region; it reads NPVDHPHGGGEGRAPIGRKKPTTPWGYPALGRKSRKRNKYSEKFILRHRSK.

The protein belongs to the universal ribosomal protein uL2 family. As to quaternary structure, part of the 50S ribosomal subunit.

Its subcellular location is the plastid. It localises to the chloroplast. The chain is Large ribosomal subunit protein uL2c (rpl2) from Ipomoea purpurea (Common morning glory).